A 136-amino-acid chain; its full sequence is Mitochondrial pyruvate carrier 1-like protein (136 aa).

Over 2–19 (ARMAVLWRKMRDNFQSKE) the chain is Mitochondrial matrix. The chain crosses the membrane as a helical span at residues 20–42 (FREYVSSTHFWGPAFSWGLPLAA). Over 43 to 51 (FKDMKASPE) the chain is Mother cell cytoplasmic. The chain crosses the membrane as a helical span at residues 52 to 74 (IISGRMTTALILYSAIFMRFAYR). At 75–136 (VQPRNLLLMA…PGSQPPKQAS (62 aa)) the chain is on the mitochondrial matrix side. Residues 111 to 136 (EAKARDPPATAAAATSPGSQPPKQAS) form a disordered region. Over residues 117–136 (PPATAAAATSPGSQPPKQAS) the composition is skewed to low complexity.

Belongs to the mitochondrial pyruvate carrier (MPC) (TC 2.A.105) family.

It localises to the mitochondrion inner membrane. The catalysed reaction is pyruvate(out) + H(+)(out) = pyruvate(in) + H(+)(in). Functionally, mediates the uptake of pyruvate into mitochondria. This chain is Mitochondrial pyruvate carrier 1-like protein (MPC1L), found in Homo sapiens (Human).